Reading from the N-terminus, the 341-residue chain is Phenylalanine--tRNA ligase alpha subunit (341 aa).

Glu256 is a Mg(2+) binding site.

Belongs to the class-II aminoacyl-tRNA synthetase family. Phe-tRNA synthetase alpha subunit type 1 subfamily. In terms of assembly, tetramer of two alpha and two beta subunits. Mg(2+) is required as a cofactor.

It localises to the cytoplasm. The catalysed reaction is tRNA(Phe) + L-phenylalanine + ATP = L-phenylalanyl-tRNA(Phe) + AMP + diphosphate + H(+). In Leptospira borgpetersenii serovar Hardjo-bovis (strain JB197), this protein is Phenylalanine--tRNA ligase alpha subunit.